The primary structure comprises 145 residues: D-aminoacyl-tRNA deacylase (145 aa).

The Gly-cisPro motif, important for rejection of L-amino acids motif lies at 137-138 (GP).

The protein belongs to the DTD family. In terms of assembly, homodimer.

The protein resides in the cytoplasm. It catalyses the reaction glycyl-tRNA(Ala) + H2O = tRNA(Ala) + glycine + H(+). The enzyme catalyses a D-aminoacyl-tRNA + H2O = a tRNA + a D-alpha-amino acid + H(+). An aminoacyl-tRNA editing enzyme that deacylates mischarged D-aminoacyl-tRNAs. Also deacylates mischarged glycyl-tRNA(Ala), protecting cells against glycine mischarging by AlaRS. Acts via tRNA-based rather than protein-based catalysis; rejects L-amino acids rather than detecting D-amino acids in the active site. By recycling D-aminoacyl-tRNA to D-amino acids and free tRNA molecules, this enzyme counteracts the toxicity associated with the formation of D-aminoacyl-tRNA entities in vivo and helps enforce protein L-homochirality. The protein is D-aminoacyl-tRNA deacylase of Shewanella loihica (strain ATCC BAA-1088 / PV-4).